A 503-amino-acid polypeptide reads, in one-letter code: D-xylose-proton symporter-like 2 (503 aa).

Residues 1 to 15 (MALDPEQQQPISSVS) show a composition bias toward polar residues. Positions 1 to 32 (MALDPEQQQPISSVSREFGKSSGEISPEREPL) are disordered. A2 is modified (N-acetylalanine). The residue at position 26 (S26) is a Phosphoserine. 12 helical membrane passes run 42–62 (YSVV…LLYG), 99–119 (GSLY…DVIG), 124–144 (LILA…APTY), 146–166 (VLII…HAAP), 187–207 (FFIV…VNVH), 213–233 (MYAT…WLPA), 305–325 (ALII…PSVL), 346–366 (VSIL…VVID), 375–395 (LGGV…YLFF), 400–420 (VVAV…FGPI), 437–457 (GLSL…FAFS), and 467–487 (ILFC…FFIV).

Belongs to the major facilitator superfamily. Sugar transporter (TC 2.A.1.1) family.

It localises to the membrane. The sequence is that of D-xylose-proton symporter-like 2 from Arabidopsis thaliana (Mouse-ear cress).